The primary structure comprises 149 residues: 17 kDa major membrane protein (149 aa).

The signal sequence occupies residues 1–19; sequence MKKIIKLSLLSLSIAGLAS. A lipid anchor (N-palmitoyl cysteine) is attached at Cys-20. Residue Cys-20 is the site of S-diacylglycerol cysteine attachment.

The protein localises to the cell outer membrane. The polypeptide is 17 kDa major membrane protein (Francisella tularensis subsp. holarctica (strain LVS)).